The sequence spans 3124 residues: Collagen alpha-1(XII) chain (3124 aa).

An N-terminal signal peptide occupies residues Met-1 to Ala-23. The 91-residue stretch at Pro-27–Pro-117 folds into the Fibronectin type-III 1 domain. N-linked (GlcNAc...) asparagine glycosylation occurs at Asn-32. A VWFA 1 domain is found at Asp-139–Ile-311. O-linked (Xyl...) (chondroitin sulfate) serine glycosylation occurs at Ser-328. In terms of domain architecture, Fibronectin type-III 2 spans Pro-335–Val-424. Positions Asp-439–Val-615 constitute a VWFA 2 domain. Fibronectin type-III domains lie at Pro-633–Lys-722, Ala-724–Asn-815, Pro-816–Arg-906, Ser-908–Ser-998, Ala-999–Phe-1087, and Pro-1089–Asp-1179. O-linked (Xyl...) (chondroitin sulfate) serine glycans are attached at residues Ser-797, Ser-890, and Ser-981. Residues Asn-1006, Asn-1032, and Asn-1044 are each glycosylated (N-linked (GlcNAc...) asparagine). Residues Lys-1075–Met-1100 are disordered. The VWFA 3 domain occupies Asp-1199–Val-1371. Fibronectin type-III domains follow at residues Pro-1387 to Ser-1476, Ser-1477 to Pro-1568, Gly-1569 to Pro-1659, Val-1660 to Pro-1756, Gly-1759 to Asn-1853, Met-1854 to Gly-1939, Thr-1940 to Ser-2030, Gly-2031 to Leu-2121, Pro-2122 to Asn-2210, and Val-2211 to Thr-2299. A glycan (N-linked (GlcNAc...) asparagine) is linked at Asn-1512. An N-linked (GlcNAc...) asparagine glycan is attached at Asn-1767. N-linked (GlcNAc...) asparagine glycans are attached at residues Asn-2210 and Asn-2273. In terms of domain architecture, VWFA 4 spans Asp-2327–Leu-2500. Residues Ser-2455–Val-2750 form a nonhelical region (NC3) region. The region spanning Gly-2524–Pro-2716 is the Laminin G-like domain. Residues Asn-2532 and Asn-2683 are each glycosylated (N-linked (GlcNAc...) asparagine). Disordered regions lie at residues Ser-2749 to Gly-2900 and Pro-2935 to Pro-3080. Collagen-like domains lie at Gly-2751–Gly-2802, Gly-2807–Gly-2858, and Pro-2859–Gly-2900. A triple-helical region (COL2) with 1 imperfection region spans residues Gly-2751 to Ile-2902. Pro residues-rich tracts occupy residues Pro-2752–Gly-2761 and Pro-2788–Gln-2798. Residues Pro-2821 to Pro-2830 show a composition bias toward low complexity. Residues Leu-2832–Pro-2841 are compositionally biased toward pro residues. 2 stretches are compositionally biased toward low complexity: residues Pro-2842–Thr-2854 and Ala-2865–Pro-2878. Positions Arg-2899–Asp-2901 match the Cell attachment site motif. The nonhelical region (NC2) stretch occupies residues Ala-2903–Pro-2945. The segment covering Pro-2935–Gln-2944 has biased composition (polar residues). Residues Pro-2945–Pro-2954 are compositionally biased toward pro residues. In terms of domain architecture, Collagen-like 4 spans Pro-2945–Gly-2994. Positions Gly-2946–Cys-3048 are triple-helical region (COL1) with 2 imperfections. Positions Gly-2961–Gly-2970 are enriched in gly residues. Residues Gln-3010–Arg-3024 are compositionally biased toward low complexity. The tract at residues Asp-3049–Pro-3124 is nonhelical region (NC1).

The protein belongs to the fibril-associated collagens with interrupted helices (FACIT) family. As to quaternary structure, trimer of identical chains each containing 190 kDa of non-triple-helical sequences. Post-translationally, the triple-helical tail is stabilized by disulfide bonds at each end. Prolines at the third position of the tripeptide repeating unit (G-X-Y) are hydroxylated in some or all of the chains. In terms of processing, O-glycosylated; glycosaminoglycan of chondroitin-sulfate type. In terms of tissue distribution, type XII collagen is present in tendons, ligaments, perichondrium, and periosteum, all dense connective tissues containing type I collagen.

It is found in the secreted. Its subcellular location is the extracellular space. The protein localises to the extracellular matrix. Type XII collagen interacts with type I collagen-containing fibrils, the COL1 domain could be associated with the surface of the fibrils, and the COL2 and NC3 domains may be localized in the perifibrillar matrix. This Gallus gallus (Chicken) protein is Collagen alpha-1(XII) chain (COL12A1).